Consider the following 131-residue polypeptide: Glycine cleavage system H protein (131 aa).

Residues 24–106 (TVRVGITDYA…YGEGWLVDLR (83 aa)) form the Lipoyl-binding domain. Lys-65 bears the N6-lipoyllysine mark.

The protein belongs to the GcvH family. In terms of assembly, the glycine cleavage system is composed of four proteins: P, T, L and H. (R)-lipoate is required as a cofactor.

Its function is as follows. The glycine cleavage system catalyzes the degradation of glycine. The H protein shuttles the methylamine group of glycine from the P protein to the T protein. This chain is Glycine cleavage system H protein, found in Mycolicibacterium smegmatis (strain ATCC 700084 / mc(2)155) (Mycobacterium smegmatis).